Consider the following 906-residue polypeptide: Ribonucleoside-diphosphate reductase large subunit-like protein (906 aa).

Disordered regions lie at residues 1–70 and 89–129; these read MNPA…AGNT and VSWR…LSTF. Over residues 98–109 the composition is skewed to polar residues; that stretch reads PDGTPSVLSLTR.

Belongs to the ribonucleoside diphosphate reductase large chain family.

It localises to the virion. Its subcellular location is the host cytoplasm. Does not possess a ribonucleotide reductase activity. Betaherpesviruses probably use another strategy to expand the dNTP pool in a quiescent host cell. This chain is Ribonucleoside-diphosphate reductase large subunit-like protein, found in Homo sapiens (Human).